The following is a 244-amino-acid chain: 5-oxoprolinase subunit A (244 aa).

Belongs to the LamB/PxpA family. In terms of assembly, forms a complex composed of PxpA, PxpB and PxpC.

It carries out the reaction 5-oxo-L-proline + ATP + 2 H2O = L-glutamate + ADP + phosphate + H(+). Functionally, catalyzes the cleavage of 5-oxoproline to form L-glutamate coupled to the hydrolysis of ATP to ADP and inorganic phosphate. This Escherichia coli O17:K52:H18 (strain UMN026 / ExPEC) protein is 5-oxoprolinase subunit A.